A 150-amino-acid polypeptide reads, in one-letter code: Large ribosomal subunit protein bL9 (150 aa).

It belongs to the bacterial ribosomal protein bL9 family.

Its function is as follows. Binds to the 23S rRNA. The chain is Large ribosomal subunit protein bL9 from Lactococcus lactis subsp. cremoris (strain MG1363).